Here is a 524-residue protein sequence, read N- to C-terminus: MAGRKSSRTAERVPTTQKPERKSAILSPHDELRERLLETAIDMKENIPQRNTRNSSVGSQKSDCSETRKRRSTKEGPAAKRHSGEKHRNGSREDSLEYISEYSDDREVGSSSSQSSRTRGQPLPAMPEEEEVFDKSSSSDNLAESEESHEMVRLEERQDIEEEIEDDFDDEEEDVVNDKEEYEEIESEDEDDYPVQNEGFAVTKRLMNDEHMVTAPTFLSTAKCDGIGSPTKVWSLMVKRDEIPRATRFLLGNHPDMDDEKRRILIDWMMEVCESEKLHRETFHLAVDYVDRYLESSNVECSTDNFQLVGTAALFIAAKYEEIYPPKCIDFAHLTDSAFTCDNIRTMEVLIVKYIGWSLGPITSIQWLSTYLQLLGTGKKNKSDHYEEQNMYVPELLRSEYLEMCKILDFLLFEIDSFTFSYRTIAAAVLFVNYEPTCAVEKATGFMQAQLEKVIEYVEPVCRAFAKQRQLLDDVIPKHESIKSDDSHNIQVYVKRSSMEPIVKSERERIQHLKARRLHPQRLF.

Positions 1–155 are disordered; the sequence is MAGRKSSRTA…EESHEMVRLE (155 aa). A compositionally biased stretch (basic and acidic residues) spans 18–47; the sequence is KPERKSAILSPHDELRERLLETAIDMKENI. The segment covering 48–62 has biased composition (polar residues); sequence PQRNTRNSSVGSQKS. Basic and acidic residues-rich tracts occupy residues 63-78, 86-95, and 146-155; these read DCSE…EGPA, KHRNGSREDS, and EESHEMVRLE.

Belongs to the cyclin family. Cyclin E subfamily. Interacts with a member of the CDK2/CDK protein kinases to form a serine/threonine kinase holoenzyme complex. The cyclin subunit imparts substrate specificity to the complex. In terms of tissue distribution, expressed dynamically in proliferating cells throughout development. Detectable in larval blast cells undergoing active proliferation that give rise to all tissue types, including germline, intestine, hypodermis, neurons, and muscle.

The protein resides in the nucleus. Its subcellular location is the cytoplasm. It is found in the cytoskeleton. The protein localises to the microtubule organizing center. It localises to the centrosome. The protein resides in the centriole. Functionally, essential for the control of the cell cycle at the G1/S (start) transition. In association with cdk-2, regulates proliferation, quiescent state and cell fate during the development of several cell lineages. In the embryo, initiates the establishment of cell polarity through the recruitment of the centrosomal proteins spd-2 and spd-5 during prophase. During the development of the vulva, controls the onset of vulval cell terminal differentiation by controlling the duration of G1 phase. During hypoderm development at early larval stages, controls syncytial fate of seam cell daughter cells. Involved in the progression of cell division in the intestinal lineage in larvae, and in particular in endoreplication, a specific growth pathway in the intestinal epithelium, required for feeding and gut development in growing larvae. By controlling the activity of translational repressor gld-1, regulates the pool of germline stem cells and the size of the mitotic zone by preventing entry into meiosis. In addition, repression of expression by gld-1 prevents mitosis re-entry in meiotic germline cells. The polypeptide is G1/S-specific cyclin-E (Caenorhabditis elegans).